A 132-amino-acid polypeptide reads, in one-letter code: MSTHDPISDLITRIRNAQMRSKSKVSTPGSKMRASVLEVLKSEGYIRGYASVEHASGHNELEIELKYFDGEPVIREIERVSKPGRRVYASVKNLPRVNNGLGISVLSTPKGIMADHAAREANVGGEVLFTVF.

The protein belongs to the universal ribosomal protein uS8 family. As to quaternary structure, part of the 30S ribosomal subunit. Contacts proteins S5 and S12.

One of the primary rRNA binding proteins, it binds directly to 16S rRNA central domain where it helps coordinate assembly of the platform of the 30S subunit. This chain is Small ribosomal subunit protein uS8, found in Afipia carboxidovorans (strain ATCC 49405 / DSM 1227 / KCTC 32145 / OM5) (Oligotropha carboxidovorans).